Reading from the N-terminus, the 406-residue chain is Arginine deiminase (406 aa).

The active-site Amidino-cysteine intermediate is the Cys-396.

It belongs to the arginine deiminase family.

Its subcellular location is the cytoplasm. It carries out the reaction L-arginine + H2O = L-citrulline + NH4(+). Its pathway is amino-acid degradation; L-arginine degradation via ADI pathway; carbamoyl phosphate from L-arginine: step 1/2. The chain is Arginine deiminase from Aliivibrio salmonicida (strain LFI1238) (Vibrio salmonicida (strain LFI1238)).